The chain runs to 30 residues: Peptidase 1 (30 aa).

The protein belongs to the peptidase C1 family.

It localises to the secreted. The enzyme catalyses Broad endopeptidase specificity.. Its function is as follows. Thiol protease that hydrolyzes proteins, with a preference for Phe or basic residues. The protein is Peptidase 1 (DERM1) of Dermatophagoides microceras (House dust mite).